The following is a 146-amino-acid chain: MSSLSILHLLLLLLSLHAPQAQGLPLRTPRTPYSSLMEEIMDDLKKITPSPEGSLNSDEKNILANKSLLQANLKAFMTFATDTFGSDSKIMKNLKEFQPVLPTATPTEDSILIEDSNLGDFRMKLEEYLATIRGYLRHDLAAAETI.

The N-terminal stretch at 1–17 is a signal peptide; sequence MSSLSILHLLLLLLSLH. Asparagine 65 carries an N-linked (GlcNAc...) asparagine glycan.

Belongs to the IL-3 family. As to quaternary structure, monomer. As to expression, activated T-cells, mast cells, natural killer cells.

Its subcellular location is the secreted. Granulocyte/macrophage colony-stimulating factors are cytokines that act in hematopoiesis by controlling the production, differentiation, and function of 2 related white cell populations of the blood, the granulocytes and the monocytes-macrophages. Its function is as follows. This CSF induces granulocytes, macrophages, mast cells, stem cells, erythroid cells, eosinophils and megakaryocytes. The polypeptide is Interleukin-3 (IL3) (Ovis aries (Sheep)).